Consider the following 377-residue polypeptide: Geranylgeranyl transferase type-1 subunit beta (377 aa).

PFTB repeat units follow at residues 144-186, 193-234, 245-284, and 291-333; these read KEAC…YMLN, MKKA…CLMG, LNRI…KLLK, and FEKN…SLME. Geranylgeranyl diphosphate-binding positions include 219–221 and 263–266; these read HGG and RPNK. Zn(2+) is bound by residues Asp269 and Cys271. Position 272–275 (272–275) interacts with geranylgeranyl diphosphate; sequence YSFW. A Zn(2+)-binding site is contributed by His321.

This sequence belongs to the protein prenyltransferase subunit beta family. In terms of assembly, heterodimer of FNTA and PGGT1B. PGGT1B mediates interaction with substrate peptides. Zn(2+) serves as cofactor. The cofactor is Mg(2+).

It carries out the reaction geranylgeranyl diphosphate + L-cysteinyl-[protein] = S-geranylgeranyl-L-cysteinyl-[protein] + diphosphate. In terms of biological role, catalyzes the transfer of a geranyl-geranyl moiety from geranyl-geranyl pyrophosphate to a cysteine at the fourth position from the C-terminus of proteins having the C-terminal sequence Cys-aliphatic-aliphatic-X. Known substrates include RAC1, RAC2, RAP1A and RAP1B. The protein is Geranylgeranyl transferase type-1 subunit beta (PGGT1B) of Homo sapiens (Human).